The primary structure comprises 321 residues: WD repeat-containing protein VIP3 (321 aa).

WD repeat units lie at residues 12-55, 58-97, 100-140, 156-195, 198-238, 241-280, and 283-319; these read AHED…LVRT, GHSL…TIAV, APPS…LIST, SSKK…LLHQ, GHNM…LLGS, GHTS…AIQT, and NHND…SLYD.

As to quaternary structure, component of the nuclear PAF1 complex (PAF1C), which consists of VIP2/ELF7/PAF1, VIP3/SKI8/WDR61, VIP4/LEO1, VIP5/RTF1, VIP6/ELF8/CTR9 and CDC73. Component of the cytoplasmic SKI complex, which consists of SKI2, SKI3 and VIP3/SKI8. Interacts with VIP4 and VIP6.

It is found in the nucleus. Its subcellular location is the cytoplasm. Component of the PAF1 complex (PAF1C) which is involved in histone modifications such as methylation on histone H3 'Lys-4' (H3K4me3). Involved in regulation of flowering time. Required for the expression of the flowering repressor and MADS box gene FLC. Required for histone H3 trimethylation on 'Lys-4' (H3K4me3) and histone dimethylation on 'Lys-36' (H3K36me2) at the FLC locus. Prevents trimethylation on 'Lys-27' (H3K27me3) at the same locus. Not required for meiotic recombination or progression. Component of the SKI complex which is thought to be involved in exosome-mediated RNA decay and associates with transcriptionally active genes in a manner dependent on PAF1 complex (PAF1C). Required for proper progression of cell differentiation process. The sequence is that of WD repeat-containing protein VIP3 from Arabidopsis thaliana (Mouse-ear cress).